A 334-amino-acid chain; its full sequence is Holliday junction branch migration complex subunit RuvB (334 aa).

The interval 4 to 184 (ADRLVSAGVI…FGIVQRLEFY (181 aa)) is large ATPase domain (RuvB-L). ATP-binding positions include I23, R24, G65, K68, T69, T70, 131–133 (EDY), R174, Y184, and R221. Residue T69 coordinates Mg(2+). Residues 185–255 (RVEDLQHIVG…VASRALDMLS (71 aa)) form a small ATPAse domain (RuvB-S) region. The interval 258 to 334 (SEGFDYMDRK…YKHFGITREG (77 aa)) is head domain (RuvB-H). Residues R294, R313, and R318 each contribute to the DNA site.

The protein belongs to the RuvB family. In terms of assembly, homohexamer. Forms an RuvA(8)-RuvB(12)-Holliday junction (HJ) complex. HJ DNA is sandwiched between 2 RuvA tetramers; dsDNA enters through RuvA and exits via RuvB. An RuvB hexamer assembles on each DNA strand where it exits the tetramer. Each RuvB hexamer is contacted by two RuvA subunits (via domain III) on 2 adjacent RuvB subunits; this complex drives branch migration. In the full resolvosome a probable DNA-RuvA(4)-RuvB(12)-RuvC(2) complex forms which resolves the HJ.

It localises to the cytoplasm. The enzyme catalyses ATP + H2O = ADP + phosphate + H(+). Functionally, the RuvA-RuvB-RuvC complex processes Holliday junction (HJ) DNA during genetic recombination and DNA repair, while the RuvA-RuvB complex plays an important role in the rescue of blocked DNA replication forks via replication fork reversal (RFR). RuvA specifically binds to HJ cruciform DNA, conferring on it an open structure. The RuvB hexamer acts as an ATP-dependent pump, pulling dsDNA into and through the RuvAB complex. RuvB forms 2 homohexamers on either side of HJ DNA bound by 1 or 2 RuvA tetramers; 4 subunits per hexamer contact DNA at a time. Coordinated motions by a converter formed by DNA-disengaged RuvB subunits stimulates ATP hydrolysis and nucleotide exchange. Immobilization of the converter enables RuvB to convert the ATP-contained energy into a lever motion, pulling 2 nucleotides of DNA out of the RuvA tetramer per ATP hydrolyzed, thus driving DNA branch migration. The RuvB motors rotate together with the DNA substrate, which together with the progressing nucleotide cycle form the mechanistic basis for DNA recombination by continuous HJ branch migration. Branch migration allows RuvC to scan DNA until it finds its consensus sequence, where it cleaves and resolves cruciform DNA. The polypeptide is Holliday junction branch migration complex subunit RuvB (Erwinia tasmaniensis (strain DSM 17950 / CFBP 7177 / CIP 109463 / NCPPB 4357 / Et1/99)).